A 109-amino-acid chain; its full sequence is Putative RNase MJ1380 (109 aa).

Catalysis depends on residues arginine 76 and histidine 81. Residues 76 to 83 carry the RX(4)HXY motif motif; that stretch reads RNILIHKY. Residue tyrosine 83 is modified to O-di-AMP-tyrosine.

It belongs to the HepT RNase toxin family. Homodimer, probably forms a complex with cognate antitoxin MJ1379. Modified by cognate antitoxin MJ1379; probably at least 2 successive AMPylation events occur on Tyr-83.

Its function is as follows. Probable toxic component of a putative type VII toxin-antitoxin (TA) system, probably an RNase. Probably neutralized by cognate antitoxin MJ1379. Neutralization may be due to AMPylation by antitoxin MJ1379. The polypeptide is Putative RNase MJ1380 (Methanocaldococcus jannaschii (strain ATCC 43067 / DSM 2661 / JAL-1 / JCM 10045 / NBRC 100440) (Methanococcus jannaschii)).